A 318-amino-acid chain; its full sequence is MRLLAGWLCLSLASVWLARRMWTLRSPLSRSLYVNMTSGPGGPAAAAGGGKDTHQWYVCNREKLCESLQSVFVQSYLDQGTQIFLNNSIEKSGWLFIQLYHSFVSSVFSLFMSRTSINGLLGRGSMFVFSPDQFQRLLRINPDWKTHRLLDLGAGDGEVTKIMSPHFEEIYATELSETMIWQLQKKKYRVLGINEWQNTGFQYDVISCLNLLDRCDQPLTLLKDIRSVLEPTQGRVILALVLPFHPYVENVGGKWEKPSEILEIKGQNWEEQVNSLPEVFRKAGFVVEAFTRLPYLCEGDMYNDYYVLDDAVFVLRPV.

The N-terminal stretch at 1-18 (MRLLAGWLCLSLASVWLA) is a signal peptide. Residue Asn-35 is glycosylated (N-linked (GlcNAc...) asparagine). The S-adenosyl-L-homocysteine site is built by Glu-174, Asn-210, and Tyr-295.

This sequence belongs to the METTL9 family. Expressed in liver, colon, small intestine, skin, kidney and to a lesser extent in spleen, lung, thymus and stomach. Not detected in fibroblast and endothelial cells.

It is found in the endoplasmic reticulum. The protein localises to the mitochondrion. The enzyme catalyses L-histidyl-[protein] + S-adenosyl-L-methionine = N(pros)-methyl-L-histidyl-[protein] + S-adenosyl-L-homocysteine + H(+). In terms of biological role, protein-histidine N-methyltransferase that specifically catalyzes 1-methylhistidine (pros-methylhistidine) methylation of target proteins. Specifically methylates the second His of proteins with a His-x-His (HxH) motif (where 'x' is preferably a small amino acid), while exploiting the first one as a recognition signature. Catalyzes methylation of target proteins such as S100A9, NDUFB3, SLC39A5, SLC39A7, ARMC6 and DNAJB12; 1-methylhistidine modification may affect the binding of zinc and other metals to its target proteins. Constitutes the main methyltransferase for the 1-methylhistidine modification in cell. The protein is Protein-L-histidine N-pros-methyltransferase of Mus musculus (Mouse).